The following is a 220-amino-acid chain: NAD(P)H-quinone oxidoreductase subunit M, chloroplastic (220 aa).

A chloroplast-targeting transit peptide spans 1 to 37; it reads MATTASPFLSPAKLSLERRLPRATWTARRSVRFPPVR. The disordered stretch occupies residues 20–91; that stretch reads LPRATWTARR…PVQPLAESKN (72 aa). Residues 34-44 show a composition bias toward low complexity; that stretch reads PPVRAQDQQQQ.

This sequence belongs to the NDH complex subunit M family. As to quaternary structure, part of the chloroplast NDH complex, composed of a mixture of chloroplast and nucleus encoded subunits. Component of the NDH subcomplex A, at least composed of ndhH, ndhI, ndhJ, ndhK, ndhL, ndhM, ndhN and ndhO.

It is found in the plastid. It localises to the chloroplast thylakoid membrane. The catalysed reaction is a plastoquinone + NADH + (n+1) H(+)(in) = a plastoquinol + NAD(+) + n H(+)(out). It carries out the reaction a plastoquinone + NADPH + (n+1) H(+)(in) = a plastoquinol + NADP(+) + n H(+)(out). Functionally, NDH shuttles electrons from NAD(P)H:plastoquinone, via FMN and iron-sulfur (Fe-S) centers, to quinones in the photosynthetic chain and possibly in a chloroplast respiratory chain. The immediate electron acceptor for the enzyme in this species is believed to be plastoquinone. Couples the redox reaction to proton translocation, and thus conserves the redox energy in a proton gradient. The polypeptide is NAD(P)H-quinone oxidoreductase subunit M, chloroplastic (Oryza sativa subsp. indica (Rice)).